Here is a 1286-residue protein sequence, read N- to C-terminus: CLIP-associating protein 2 (1286 aa).

Positions 1 to 40 (MRRLICKRICDYKSFDDEESVDGNRPSSAASAFKVPAPKT) are golgi localization. Residues S14 and S20 each carry the phosphoserine modification. The interval 17-67 (DEESVDGNRPSSAASAFKVPAPKTPGNPVSSARKPGSAGGPKVGGPSKEGG) is disordered. Gly residues predominate over residues 53–67 (SAGGPKVGGPSKEGG). The interval 66 to 317 (GGAGAVDEDD…KSLQTYLKSS (252 aa)) is TOG 1. HEAT repeat units follow at residues 179–214 (HGAE…IRHT), 215–251 (HVPR…EWQT), and 256–293 (RHAA…HFPG). The tract at residues 320-374 (VASLPQSDRSSSSSQESLNRPFSSKWSTANPSTVAGRVSVGGSKANPLPGSLQRS) is disordered. S322, S333, and S336 each carry phosphoserine. The segment covering 322 to 340 (SLPQSDRSSSSSQESLNRP) has biased composition (low complexity). Residues 341–352 (FSSKWSTANPST) are compositionally biased toward polar residues. Phosphoserine occurs at positions 374, 376, and 413. Positions 411 to 473 (YASLEDTSDK…GSRSGSPGRV (63 aa)) are disordered. Positions 417–431 (TSDKMDGTASDDGRV) are enriched in basic and acidic residues. Residues 450–565 (RGRSRTKMVS…GPGYGISQSS (116 aa)) are interaction with microtubules, MAPRE1 and MAPRE3. The span at 459 to 473 (SQSQPGSRSGSPGRV) shows a compositional bias: low complexity. S461, S465, S469, S484, and S495 each carry phosphoserine. The disordered stretch occupies residues 493–564 (SASAQKRSKI…LGPGYGISQS (72 aa)). The short motif at 500 to 503 (SKIP) is the SXIP motif 1; mediates interaction with MAPRE1 and targeting to microtubule plus ends element. Residue S513 is modified to Phosphoserine. The short motif at 523–526 (SRIP) is the SXIP motif 2; mediates interaction with MAPRE1 and targeting to microtubule plus ends element. Phosphoserine occurs at positions 531, 535, 570, 572, 581, 614, and 620. Over residues 605–616 (RRYESYGMHSDD) the composition is skewed to basic and acidic residues. The tract at residues 605–638 (RRYESYGMHSDDDANSDASSACSERSYSSRNGSI) is disordered. The segment covering 620 to 634 (SDASSACSERSYSSR) has biased composition (low complexity). Residues 642–873 (MRQTEDVAEV…TKLLHNHLRN (232 aa)) form a TOG 2 region. HEAT repeat units lie at residues 702–739 (KVFS…KMGA) and 764–801 (LQFN…QMDP). At T779 the chain carries Phosphothreonine. The tract at residues 864–1286 (TKLLHNHLRN…DPTADVSGQS (423 aa)) is interaction with RSN and localization to the Golgi and kinetochores. Disordered regions lie at residues 870 to 920 (HLRN…FDYD) and 944 to 989 (SFRS…SQPA). Polar residues-rich tracts occupy residues 872 to 884 (RNTG…SMGS) and 893 to 914 (SPAN…TLSP). Residue S884 is modified to Phosphoserine. A phosphoserine mark is found at S944, S947, S1005, and S1021. Over residues 947-964 (SQEDMSEPVRRDPKKEDG) the composition is skewed to basic and acidic residues. The tract at residues 1009–1286 (RDYNPYNYSD…DPTADVSGQS (278 aa)) is required for cortical localization. HEAT repeat units lie at residues 1046–1083 (LDHS…TQEE), 1090–1127 (EHFK…HQPA), and 1208–1245 (MLLP…VIGD).

It belongs to the CLASP family. In terms of assembly, interacts with microtubules. Interacts with MAPRE1; probably required for targeting to growing microtubule plus ends. Interacts with ERC1, MAPRE3 and PHLDB2. The interaction with ERC1 may be mediated by PHLDB2. Interacts with GCC2; recruits CLASP2 to Golgi membranes. Interacts with CLIP2 and RSN. Interacts with MACF1. Interacts with mtcl2. Interacts with MTCL1. Phosphorylated by GSK3B. Phosphorylation by GSK3B may negatively regulate binding to microtubule lattices in lamella. Isoform 2 is phosphorylated on Ser-241. In terms of tissue distribution, highly expressed in brain and at low levels in heart, kidney and lung.

It localises to the cytoplasm. The protein resides in the cytoskeleton. The protein localises to the microtubule organizing center. It is found in the centrosome. Its subcellular location is the chromosome. It localises to the centromere. The protein resides in the kinetochore. The protein localises to the spindle. It is found in the spindle pole. Its subcellular location is the golgi apparatus. It localises to the trans-Golgi network. The protein resides in the cell membrane. The protein localises to the cell projection. It is found in the ruffle membrane. Its subcellular location is the cell cortex. In terms of biological role, microtubule plus-end tracking protein that promotes the stabilization of dynamic microtubules. Involved in the nucleation of noncentrosomal microtubules originating from the trans-Golgi network (TGN). Required for the polarization of the cytoplasmic microtubule arrays in migrating cells towards the leading edge of the cell. May act at the cell cortex to enhance the frequency of rescue of depolymerizing microtubules by attaching their plus-ends to cortical platforms composed of ERC1 and PHLDB2. This cortical microtubule stabilizing activity is regulated at least in part by phosphatidylinositol 3-kinase signaling. Also performs a similar stabilizing function at the kinetochore which is essential for the bipolar alignment of chromosomes on the mitotic spindle. Acts as a mediator of ERBB2-dependent stabilization of microtubules at the cell cortex. In Mus musculus (Mouse), this protein is CLIP-associating protein 2 (Clasp2).